A 188-amino-acid polypeptide reads, in one-letter code: Guanylate kinase (188 aa).

The region spanning 2–183 (TKLIIISAPS…CVEQIRKAIA (182 aa)) is the Guanylate kinase-like domain. 9-16 (APSGTGKS) provides a ligand contact to ATP.

The protein belongs to the guanylate kinase family.

It localises to the cytoplasm. The catalysed reaction is GMP + ATP = GDP + ADP. Essential for recycling GMP and indirectly, cGMP. The chain is Guanylate kinase from Porphyromonas gingivalis (strain ATCC BAA-308 / W83).